The primary structure comprises 467 residues: Putative vacuolar protein sorting-associated protein TDA6 (467 aa).

The helical transmembrane segment at 8-28 (ILLWFLIVDLSVIRALVLPPL) threads the bilayer. 3 N-linked (GlcNAc...) asparagine glycosylation sites follow: asparagine 61, asparagine 124, and asparagine 141.

Belongs to the VPS62 family.

The protein resides in the membrane. Functionally, involved in vacuolar protein sorting. This Saccharomyces cerevisiae (strain ATCC 204508 / S288c) (Baker's yeast) protein is Putative vacuolar protein sorting-associated protein TDA6 (TDA6).